Here is a 180-residue protein sequence, read N- to C-terminus: ATP synthase subunit delta (180 aa).

Belongs to the ATPase delta chain family. As to quaternary structure, F-type ATPases have 2 components, F(1) - the catalytic core - and F(0) - the membrane proton channel. F(1) has five subunits: alpha(3), beta(3), gamma(1), delta(1), epsilon(1). CF(0) has four main subunits: a(1), b(1), b'(1) and c(10-14). The alpha and beta chains form an alternating ring which encloses part of the gamma chain. F(1) is attached to F(0) by a central stalk formed by the gamma and epsilon chains, while a peripheral stalk is formed by the delta, b and b' chains.

It localises to the cellular thylakoid membrane. F(1)F(0) ATP synthase produces ATP from ADP in the presence of a proton or sodium gradient. F-type ATPases consist of two structural domains, F(1) containing the extramembraneous catalytic core and F(0) containing the membrane proton channel, linked together by a central stalk and a peripheral stalk. During catalysis, ATP synthesis in the catalytic domain of F(1) is coupled via a rotary mechanism of the central stalk subunits to proton translocation. In terms of biological role, this protein is part of the stalk that links CF(0) to CF(1). It either transmits conformational changes from CF(0) to CF(1) or is implicated in proton conduction. The sequence is that of ATP synthase subunit delta from Prochlorococcus marinus (strain MIT 9312).